A 198-amino-acid polypeptide reads, in one-letter code: Probable molybdenum cofactor guanylyltransferase (198 aa).

GTP is bound by residues 9-11 (LAG), Lys-22, Asp-66, and Asp-95. Asp-95 is a binding site for Mg(2+).

The protein belongs to the MobA family. Mg(2+) serves as cofactor.

The protein resides in the cytoplasm. The enzyme catalyses Mo-molybdopterin + GTP + H(+) = Mo-molybdopterin guanine dinucleotide + diphosphate. Its function is as follows. Transfers a GMP moiety from GTP to Mo-molybdopterin (Mo-MPT) cofactor (Moco or molybdenum cofactor) to form Mo-molybdopterin guanine dinucleotide (Mo-MGD) cofactor. The protein is Probable molybdenum cofactor guanylyltransferase of Clostridium perfringens (strain ATCC 13124 / DSM 756 / JCM 1290 / NCIMB 6125 / NCTC 8237 / Type A).